The following is a 108-amino-acid chain: Urease subunit beta (108 aa).

It belongs to the urease beta subunit family. In terms of assembly, heterotrimer of UreA (gamma), UreB (beta) and UreC (alpha) subunits. Three heterotrimers associate to form the active enzyme.

The protein resides in the cytoplasm. The enzyme catalyses urea + 2 H2O + H(+) = hydrogencarbonate + 2 NH4(+). The protein operates within nitrogen metabolism; urea degradation; CO(2) and NH(3) from urea (urease route): step 1/1. This chain is Urease subunit beta, found in Microcystis aeruginosa (strain NIES-843 / IAM M-2473).